A 316-amino-acid chain; its full sequence is Transaldolase (316 aa).

The Schiff-base intermediate with substrate role is filled by Lys-132.

It belongs to the transaldolase family. Type 1 subfamily. Homodimer.

The protein resides in the cytoplasm. The catalysed reaction is D-sedoheptulose 7-phosphate + D-glyceraldehyde 3-phosphate = D-erythrose 4-phosphate + beta-D-fructose 6-phosphate. The protein operates within carbohydrate degradation; pentose phosphate pathway; D-glyceraldehyde 3-phosphate and beta-D-fructose 6-phosphate from D-ribose 5-phosphate and D-xylulose 5-phosphate (non-oxidative stage): step 2/3. Transaldolase is important for the balance of metabolites in the pentose-phosphate pathway. In Vibrio vulnificus (strain YJ016), this protein is Transaldolase.